Here is a 146-residue protein sequence, read N- to C-terminus: Hemoglobin subunit beta (146 aa).

Residues 2–146 enclose the Globin domain; sequence HWTAEEKSAI…VAHALAHQYH (145 aa). The heme b site is built by His63 and His92.

The protein belongs to the globin family. In terms of assembly, heterotetramer of two alpha chains and two beta chains. Oxygenation results in dissociation to dimers. In terms of tissue distribution, red blood cells.

In terms of biological role, involved in oxygen transport from the lung to the various peripheral tissues. The sequence is that of Hemoglobin subunit beta (HBB) from Erythrolamprus miliaris (South American water snake).